A 206-amino-acid chain; its full sequence is Glycerol-3-phosphate acyltransferase 1 (206 aa).

5 consecutive transmembrane segments (helical) span residues 7–27, 54–74, 81–101, 114–134, and 155–175; these read LVIGYFLGNILFAMIVTKIFL, ILTCIGDLAKTLAALLIVYFI, DLSFAGLGVVLGHSFPFWNHF, IVFFDWRAGLIALLIGLFLVI, and WINFGWEQGLIFLIATLIMIF.

It belongs to the PlsY family. In terms of assembly, probably interacts with PlsX.

Its subcellular location is the cell membrane. It catalyses the reaction an acyl phosphate + sn-glycerol 3-phosphate = a 1-acyl-sn-glycero-3-phosphate + phosphate. Its pathway is lipid metabolism; phospholipid metabolism. In terms of biological role, catalyzes the transfer of an acyl group from acyl-phosphate (acyl-PO(4)) to glycerol-3-phosphate (G3P) to form lysophosphatidic acid (LPA). This enzyme utilizes acyl-phosphate as fatty acyl donor, but not acyl-CoA or acyl-ACP. This is Glycerol-3-phosphate acyltransferase 1 from Lactobacillus johnsonii (strain CNCM I-12250 / La1 / NCC 533).